The primary structure comprises 214 residues: Protein-L-isoaspartate O-methyltransferase (214 aa).

The active site involves serine 63.

This sequence belongs to the methyltransferase superfamily. L-isoaspartyl/D-aspartyl protein methyltransferase family.

It localises to the cytoplasm. The catalysed reaction is [protein]-L-isoaspartate + S-adenosyl-L-methionine = [protein]-L-isoaspartate alpha-methyl ester + S-adenosyl-L-homocysteine. Its function is as follows. Catalyzes the methyl esterification of L-isoaspartyl residues in peptides and proteins that result from spontaneous decomposition of normal L-aspartyl and L-asparaginyl residues. It plays a role in the repair and/or degradation of damaged proteins. The polypeptide is Protein-L-isoaspartate O-methyltransferase (Desulfotalea psychrophila (strain LSv54 / DSM 12343)).